A 78-amino-acid chain; its full sequence is RTX-VII (78 aa).

The N-terminal stretch at 1-22 is a signal peptide; it reads MKTIVYLIVSILLLSSTVLVLA. Residues 23-40 constitute a propeptide that is removed on maturation; it reads EGNAASHELQEYPIEEQR. Cystine bridges form between C42–C58, C47–C63, C57–C73, and C65–C71. Position 76 is an arginine amide (R76).

As to expression, expressed by the venom gland.

It localises to the secreted. In terms of biological role, agonist of rat Nav1.3/SCN3A. This toxin increases the peak current amplitude, and potently inhibits the fast inactivation of the channel (EC(50)=120 nM). The inhibition of fast inactivation is voltage-independent (depolarizing voltages ranging from 220 mV to 130 mV). The toxin might bind to the domain IV of the Nav1.3 channel, while domain II might not participate in interacting with the toxin but could determine the efficacy of RTX-VII. In vivo, when intracerebroventricularly injected into mice, the toxin causes involuntary body twitching (seizure-like symptoms). The sequence is that of RTX-VII from Macrothele raveni (Funnel-web spider).